A 419-amino-acid polypeptide reads, in one-letter code: 3-isopropylmalate dehydratase large subunit (419 aa).

Residues cysteine 300, cysteine 360, and cysteine 363 each coordinate [4Fe-4S] cluster.

It belongs to the aconitase/IPM isomerase family. LeuC type 2 subfamily. Heterodimer of LeuC and LeuD. The cofactor is [4Fe-4S] cluster.

It catalyses the reaction (2R,3S)-3-isopropylmalate = (2S)-2-isopropylmalate. Its pathway is amino-acid biosynthesis; L-leucine biosynthesis; L-leucine from 3-methyl-2-oxobutanoate: step 2/4. Catalyzes the isomerization between 2-isopropylmalate and 3-isopropylmalate, via the formation of 2-isopropylmaleate. This chain is 3-isopropylmalate dehydratase large subunit, found in Clostridium beijerinckii (strain ATCC 51743 / NCIMB 8052) (Clostridium acetobutylicum).